Reading from the N-terminus, the 327-residue chain is Sideroflexin FSF1 (327 aa).

The residue at position 2 (Ala2) is an N-acetylalanine. The next 4 helical transmembrane spans lie at 98–118 (NLVVTVGMLTPGLGTAGTVFW), 143–163 (SQLLTNYAAAVTASCGVALGL), 179–199 (LILGRLVPFAAVVSAGIVNVF), and 272–292 (ANLGLISVTMFSALPFALGIF).

Belongs to the sideroflexin family.

It localises to the mitochondrion membrane. In terms of biological role, mitochondrial amino-acid transporter that mediates transport of serine into mitochondria. This Saccharomyces cerevisiae (strain ATCC 204508 / S288c) (Baker's yeast) protein is Sideroflexin FSF1.